The primary structure comprises 504 residues: MYTLLDILKGLPLLAVAAIASADYPTIPSDLTTPVQQRLAISGMNSVSVGWNTYEKLLKPCVQYGTSSTDLSQETCSLISTTYNTSRTWSNTVILTDLTPATTYYYQIVSTNSTVNSFFSPRTPGDKSPFTTSVVIDLGVYGADGFTVDADGDPTRKVLIPEVEPALNHTTIGRLADTWDDYEWVLHPGDFGYADDWYLTPTNVGDGVNAYEAILENFYDQLAPIAGGKVYMASPGNHEADCEELGTPAIELSCPEGQKNFTDFNVRFGKNMPTSFSSTSSNTKAKVNANKAAALANPPFWYSFEYGMVHVTMIDTETDFPNAPDAPFGTAGLDGGPFGYTGQQLDFFEADLASVDRTVTPWLLVAGHRPWYSTGGQSNICSACKTAFEPLMYQYGVDLGVFGHVHNSQRFAPVNNSVVDPAGMDNPTAPMYIIAGGAGNIEGLSSVGNNISSNRFAYAETFSYATLTFEDENNLSIQFIESATGDILDSSTLYKAHTEQFVNQ.

The N-terminal stretch at 1–22 (MYTLLDILKGLPLLAVAAIASA) is a signal peptide. N-linked (GlcNAc...) asparagine glycosylation is found at asparagine 84, asparagine 112, asparagine 168, asparagine 260, asparagine 415, asparagine 450, and asparagine 474.

This sequence belongs to the metallophosphoesterase superfamily. Purple acid phosphatase family. In terms of assembly, monomer.

The protein localises to the secreted. It catalyses the reaction a phosphate monoester + H2O = an alcohol + phosphate. Acid phosphatase involved in the regulation of fungal phenotypic traits and virulence in C.parasitica. The sequence is that of Acid phosphatase A from Cryphonectria parasitica (strain ATCC 38755 / EP155).